The following is a 437-amino-acid chain: GTPase Der (437 aa).

2 consecutive EngA-type G domains span residues 3–167 and 176–352; these read NLVA…SKEG and PRFA…QART. Residues 9-16, 56-60, 119-122, 182-189, 229-233, and 294-297 each bind GTP; these read GRPNVGKS, DTGGW, NKTD, GRPNAGKS, DTAGI, and NKWD. In terms of domain architecture, KH-like spans 353-437; that stretch reads TRIPTARLNE…TPINIFIRQK (85 aa).

Belongs to the TRAFAC class TrmE-Era-EngA-EngB-Septin-like GTPase superfamily. EngA (Der) GTPase family. In terms of assembly, associates with the 50S ribosomal subunit.

GTPase that plays an essential role in the late steps of ribosome biogenesis. The chain is GTPase Der from Phocaeicola vulgatus (strain ATCC 8482 / DSM 1447 / JCM 5826 / CCUG 4940 / NBRC 14291 / NCTC 11154) (Bacteroides vulgatus).